A 352-amino-acid polypeptide reads, in one-letter code: MSVPDRKRALEAAIAYIEKQFGAGSIMSLGKHSSAHEISTIKTGALSLDLALGIGGVPKGRIVEIFGPESSGKTTLATHIVANAQKMGGVAAYIDAEHALDPNYAALIGANINDLMISQPDCGEDALSIAELLARSGAVDVIVIDSVAALVPKSELEGEIGDVHVGLQARMMSQALRKLTATLARTNTCAIFINQIREKIGVSFGNPETTTGGRALKFYSSIRIDIRRIGSIKGGENFDIGNRIKVKVAKNKLAPPFRTAEFDILFNEGISSAGCIIDLAVEKNIIDKKGSWFNYQDRKLGQGREAVREELKRNKELFHELERRIYESVQASQAPAAACVDSESREVAEAAK.

67–74 (GPESSGKT) contacts ATP.

It belongs to the RecA family.

The protein localises to the cytoplasm. Can catalyze the hydrolysis of ATP in the presence of single-stranded DNA, the ATP-dependent uptake of single-stranded DNA by duplex DNA, and the ATP-dependent hybridization of homologous single-stranded DNAs. It interacts with LexA causing its activation and leading to its autocatalytic cleavage. The protein is Protein RecA of Chlamydia trachomatis serovar L2 (strain ATCC VR-902B / DSM 19102 / 434/Bu).